Consider the following 410-residue polypeptide: Arginine biosynthesis bifunctional protein ArgJ (410 aa).

Positions 160, 186, 197, 283, 405, and 410 each coordinate substrate. Catalysis depends on Thr197, which acts as the Nucleophile.

Belongs to the ArgJ family. As to quaternary structure, heterotetramer of two alpha and two beta chains.

Its subcellular location is the cytoplasm. The catalysed reaction is N(2)-acetyl-L-ornithine + L-glutamate = N-acetyl-L-glutamate + L-ornithine. It catalyses the reaction L-glutamate + acetyl-CoA = N-acetyl-L-glutamate + CoA + H(+). Its pathway is amino-acid biosynthesis; L-arginine biosynthesis; L-ornithine and N-acetyl-L-glutamate from L-glutamate and N(2)-acetyl-L-ornithine (cyclic): step 1/1. The protein operates within amino-acid biosynthesis; L-arginine biosynthesis; N(2)-acetyl-L-ornithine from L-glutamate: step 1/4. Its function is as follows. Catalyzes two activities which are involved in the cyclic version of arginine biosynthesis: the synthesis of N-acetylglutamate from glutamate and acetyl-CoA as the acetyl donor, and of ornithine by transacetylation between N(2)-acetylornithine and glutamate. This is Arginine biosynthesis bifunctional protein ArgJ from Geobacillus kaustophilus (strain HTA426).